A 114-amino-acid chain; its full sequence is Small ribosomal subunit protein eS25 (114 aa).

The interval 1 to 33 is disordered; that stretch reads MAPKKDKAPPPSSKPAKSGGKQKKKKWSKGKQK. Residues 20–30 show a composition bias toward basic residues; sequence GKQKKKKWSKG.

Belongs to the eukaryotic ribosomal protein eS25 family.

The protein is Small ribosomal subunit protein eS25 (RPS25) of Amaranthus cruentus (Purple amaranth).